Reading from the N-terminus, the 364-residue chain is Serpentine receptor class epsilon-27 (364 aa).

7 helical membrane-spanning segments follow: residues 31-51 (VIASIELILYSICLYIVVVSL), 64-84 (FIILVAPFFGIWFELIIGKLI), 125-145 (LLIIAGFMEYHYMFSVVFGAV), 167-187 (IFIPIALTVFFQIIAITCSCL), 195-215 (IITINGTWIVSCACSSIVFFL), 257-277 (LIFSELGTISIIGLIIATLLL), and 290-310 (NALFLNPFGICTVAMYSIPAW).

This sequence belongs to the nematode receptor-like protein sre family.

The protein resides in the membrane. The protein is Serpentine receptor class epsilon-27 (sre-27) of Caenorhabditis elegans.